We begin with the raw amino-acid sequence, 1706 residues long: Probable ATP-dependent RNA helicase DDX60-like (1706 aa).

The segment at 545 to 580 (RPKEDSSGASGEILQNTKPHQITKKSKKKSFLKEDQ) is disordered. The segment covering 551–564 (SGASGEILQNTKPH) has biased composition (polar residues). The segment covering 565–574 (QITKKSKKKS) has biased composition (basic residues). Positions 752–919 (LDVVDKNESA…WLQSVKQYWK (168 aa)) constitute a Helicase ATP-binding domain. Residue 765–772 (APTSSGKT) participates in ATP binding. A DEAH box motif is present at residues 869–872 (DEVH). The region spanning 1205–1354 (DVKALHTEIT…QFPLSITLVL (150 aa)) is the Helicase C-terminal domain.

It belongs to the helicase family.

The catalysed reaction is ATP + H2O = ADP + phosphate + H(+). The polypeptide is Probable ATP-dependent RNA helicase DDX60-like (Homo sapiens (Human)).